The following is a 135-amino-acid chain: Small ribosomal subunit protein uS8 (135 aa).

This sequence belongs to the universal ribosomal protein uS8 family. Part of the 30S ribosomal subunit. Contacts proteins S5 and S12.

Functionally, one of the primary rRNA binding proteins, it binds directly to 16S rRNA central domain where it helps coordinate assembly of the platform of the 30S subunit. In Corynebacterium urealyticum (strain ATCC 43042 / DSM 7109), this protein is Small ribosomal subunit protein uS8.